Here is a 632-residue protein sequence, read N- to C-terminus: MSEESHPHEGHMTPSKLFYLALGSVGVVYGDIGTSPLYAFREALKPIAHDGLTRFEVISLISLMIWALTIIVTIKYVLFLLRADNEGEGGTLSLLALLMKTANGHTAILMLLGLMGAALFLGDAMITPALSVLSAVEGLKLVTPSLSDYIVPISVVILALLFVVQSRGTGAVARFFGPITAVWFLVMAAAGISHISDDFGILAAFNPYYAVSFLLHEGFYGVVVLGAVFLTVTGAEALYADLGHFGRRPIQWAWFLLVFPALTLNYLGQGALVLGKPETMSDPFYLMYPKWALLPVVILATAATIIASQAVITGAFSMVRQGINLGFLPRMEILFTSETNTGQIFVPSVNAVLFIGVIFLVLSFKTSDALATAYGISVTGAMVVTSIMAFEFVRARWNWSLPLAVVALAPLVVLELIFLGANLLKIHDGGYIPILIATAFTVIMWTWRRGTAILMEKTRHTDIPLPSFVSAIERKSDHSPAQVPGTAIFLTSDPESAPAALLHNLKHNHVLHDRNVILTIRTANKPRVLNQDRFRIEQISERFFRVELLFGYMEAQNVSQALAVLRKAGLKFDIMSTSFYLGRQKVIPDTNSGMPYWQDRFFILLANGASLPSDYFHLPANRVVELGSQIIV.

A run of 12 helical transmembrane segments spans residues 17-37 (LFYL…TSPL), 60-80 (LISL…VLFL), 106-126 (TAIL…DAMI), 144-164 (PSLS…LFVV), 175-195 (FFGP…ISHI), 210-230 (AVSF…AVFL), 254-274 (WFLL…ALVL), 292-312 (ALLP…QAVI), 344-364 (IFVP…VLSF), 370-390 (LATA…IMAF), 401-421 (LPLA…FLGA), and 426-446 (IHDG…IMWT).

This sequence belongs to the HAK/KUP transporter (TC 2.A.72) family.

It is found in the cell inner membrane. The enzyme catalyses K(+)(in) + H(+)(in) = K(+)(out) + H(+)(out). Its function is as follows. Transport of potassium into the cell. Likely operates as a K(+):H(+) symporter. This Rhizobium etli (strain ATCC 51251 / DSM 11541 / JCM 21823 / NBRC 15573 / CFN 42) protein is Probable potassium transport system protein Kup 3.